The sequence spans 357 residues: tRNA pseudouridine synthase Pus10 (357 aa).

Positions 1–118 (MNLCRECYGI…TFTFELQIRP (118 aa)) constitute a THUMP domain. Residue D187 is the Nucleophile of the active site. Positions 251 and 322 each coordinate substrate.

The protein belongs to the pseudouridine synthase Pus10 family.

It catalyses the reaction uridine(54) in tRNA = pseudouridine(54) in tRNA. The enzyme catalyses uridine(55) in tRNA = pseudouridine(55) in tRNA. Functionally, responsible for synthesis of pseudouridine from uracil-54 and uracil-55 in the psi GC loop of transfer RNAs. The polypeptide is tRNA pseudouridine synthase Pus10 (Archaeoglobus fulgidus (strain ATCC 49558 / DSM 4304 / JCM 9628 / NBRC 100126 / VC-16)).